A 438-amino-acid polypeptide reads, in one-letter code: tRNA wybutosine-synthesizing protein 2 homolog (438 aa).

S-adenosyl-L-methionine-binding positions include Ser209, Lys216, Glu256, and 284-285 (DN).

It belongs to the class I-like SAM-binding methyltransferase superfamily. TRM5/TYW2 family.

The catalysed reaction is 4-demethylwyosine(37) in tRNA(Phe) + S-adenosyl-L-methionine = 4-demethyl-7-[(3S)-3-amino-3-carboxypropyl]wyosine(37) in tRNA(Phe) + S-methyl-5'-thioadenosine + H(+). It participates in tRNA modification; wybutosine-tRNA(Phe) biosynthesis. S-adenosyl-L-methionine-dependent transferase that acts as a component of the wybutosine biosynthesis pathway. Wybutosine is a hyper modified guanosine with a tricyclic base found at the 3'-position adjacent to the anticodon of eukaryotic phenylalanine tRNA. Catalyzes the transfer of the alpha-amino-alpha-carboxypropyl (acp) group from S-adenosyl-L-methionine to the C-7 position of 4-demethylwyosine (imG-14) to produce wybutosine-86. The protein is tRNA wybutosine-synthesizing protein 2 homolog (TRMT12) of Bos taurus (Bovine).